Here is a 156-residue protein sequence, read N- to C-terminus: MKLLVLRLILIISTIFVLLNLSCMVNGLSLKRKSIVSDHWVNVANSIDGKTLTYNTIANKVDFLQFRVDREDESRILNDMYINVTSVKAARFGIFFNNFNPANSSNDSRGRAGYCPIWFATCGAETPYFSLGSNNSYTSDLTFTVTVRDEIKLCDF.

The N-terminal stretch at 1–27 is a signal peptide; sequence MKLLVLRLILIISTIFVLLNLSCMVNG. Residues N20, N83, N103, N106, and N134 are each glycosylated (N-linked (GlcNAc...) asparagine).

It localises to the secreted. This is an uncharacterized protein from Dictyostelium discoideum (Social amoeba).